The following is a 272-amino-acid chain: 2-amino-3,7-dideoxy-D-threo-hept-6-ulosonate synthase (272 aa).

The active-site Proton acceptor is Asp33. 1-deoxy-D-threo-hexo-2,5-diulose 6-phosphate-binding positions include 33 to 37 (DHGVS) and 153 to 155 (YPR). The Proton donor role is filled by Tyr153. Catalysis depends on Lys184, which acts as the Schiff-base intermediate with substrate. Residues 209–210 (GG) and 237–238 (GR) contribute to the 1-deoxy-D-threo-hexo-2,5-diulose 6-phosphate site.

It belongs to the DeoC/FbaB aldolase family. ADHS subfamily. In terms of assembly, homodecamer.

It catalyses the reaction 1-deoxy-D-threo-hexo-2,5-diulose 6-phosphate + L-aspartate 4-semialdehyde = 2,3-dioxopropyl phosphate + 2-amino-2,3,7-trideoxy-D-lyxo-hept-6-ulosonate. Functionally, catalyzes a transaldol reaction between 6-deoxy-5-ketofructose 1-phosphate (DKFP) and L-aspartate semialdehyde (ASA) with an elimination of hydroxypyruvaldehyde phosphate to yield 2-amino-3,7-dideoxy-D-threo-hept-6-ulosonate (ADH). Plays a key role in an alternative pathway of the biosynthesis of 3-dehydroquinate (DHQ), which is involved in the canonical pathway for the biosynthesis of aromatic amino acids. In Methanococcus vannielii (strain ATCC 35089 / DSM 1224 / JCM 13029 / OCM 148 / SB), this protein is 2-amino-3,7-dideoxy-D-threo-hept-6-ulosonate synthase.